A 468-amino-acid chain; its full sequence is Probable 1,4-beta-D-glucan cellobiohydrolase C (468 aa).

The first 18 residues, 1–18 (MGRVSSLALALLLPAVQA), serve as a signal peptide directing secretion. The region spanning 19–54 (QQTLWGQCGGIGWTGPTNCVAGAACSTQNPYYAQCL) is the CBM1 domain. 2 disulfide bridges follow: Cys26/Cys43 and Cys37/Cys53. The tract at residues 57–106 (TATTSTTLTTTTRVTTTTTSTTSKSSSTGSTTTTKSTGTTTTSGSSTTIT) is thr-rich linker. The interval 68-107 (TRVTTTTTSTTSKSSSTGSTTTTKSTGTTTTSGSSTTITS) is disordered. The interval 107 to 468 (SAPSGNPFSG…QLLKNANPAF (362 aa)) is catalytic. The active site involves Asp198. 2 disulfides stabilise this stretch: Cys199-Cys258 and Cys390-Cys437. Catalysis depends on Asp244, which acts as the Proton donor. Asp423 functions as the Nucleophile in the catalytic mechanism.

This sequence belongs to the glycosyl hydrolase 6 (cellulase B) family.

Its subcellular location is the secreted. The catalysed reaction is Hydrolysis of (1-&gt;4)-beta-D-glucosidic linkages in cellulose and cellotetraose, releasing cellobiose from the non-reducing ends of the chains.. Functionally, the biological conversion of cellulose to glucose generally requires three types of hydrolytic enzymes: (1) Endoglucanases which cut internal beta-1,4-glucosidic bonds; (2) Exocellobiohydrolases that cut the disaccharide cellobiose from the non-reducing end of the cellulose polymer chain; (3) Beta-1,4-glucosidases which hydrolyze the cellobiose and other short cello-oligosaccharides to glucose. The protein is Probable 1,4-beta-D-glucan cellobiohydrolase C (cbhC) of Aspergillus terreus (strain NIH 2624 / FGSC A1156).